Reading from the N-terminus, the 301-residue chain is Formylmethanofuran--tetrahydromethanopterin formyltransferase (301 aa).

The protein belongs to the FTR family. In terms of assembly, homotetramer.

It is found in the cytoplasm. It carries out the reaction N-formylmethanofuran + 5,6,7,8-tetrahydromethanopterin + H(+) = N(5)-formyl-5,6,7,8-tetrahydromethanopterin + methanofuran. It functions in the pathway one-carbon metabolism; methanogenesis from CO(2); 5,10-methenyl-5,6,7,8-tetrahydromethanopterin from CO(2): step 2/3. Catalyzes the reversible transfer of a formyl group from formylmethanofuran (formyl-MFR) to tetrahydromethanopterin (H(4)MPT) to produce 5-formyl tetrahydromethanopterin (5-formyl-H(4)MPT) and methanofuran (MFR). In Methanocaldococcus jannaschii (strain ATCC 43067 / DSM 2661 / JAL-1 / JCM 10045 / NBRC 100440) (Methanococcus jannaschii), this protein is Formylmethanofuran--tetrahydromethanopterin formyltransferase.